The sequence spans 349 residues: Bifunctional nitrilase/nitrile hydratase NIT4A (349 aa).

The CN hydrolase domain maps to 29-301 (VRATVVQAST…EALISADLDL (273 aa)). E69 functions as the Proton acceptor in the catalytic mechanism. The active-site Proton donor is the K156. C190 serves as the catalytic Nucleophile.

The protein belongs to the carbon-nitrogen hydrolase superfamily. Nitrilase family. In terms of tissue distribution, expressed in roots, stems, cotyledons, leaves and flowers.

It is found in the cell membrane. It catalyses the reaction a nitrile + 2 H2O = a carboxylate + NH4(+). The enzyme catalyses 3-cyano-L-alanine + 2 H2O = L-aspartate + NH4(+). It carries out the reaction L-asparagine = 3-cyano-L-alanine + H2O. Functionally, highly specific for beta-cyano-L-alanine (Ala(CN)). Low activity with 3-phenylpropionitrile (PPN). Not associated with auxin production but may be involved in cyanide detoxification. The protein is Bifunctional nitrilase/nitrile hydratase NIT4A (NIT4A) of Nicotiana tabacum (Common tobacco).